A 589-amino-acid chain; its full sequence is Progranulin (589 aa).

An N-terminal signal peptide occupies residues 1–17; sequence MWVLMSWLAFAAGLVAG. An N-linked (GlcNAc...) asparagine glycan is attached at Asn-38. 2 cysteine pairs are disulfide-bonded: Cys-125–Cys-138 and Cys-132–Cys-148. The N-linked (GlcNAc...) asparagine glycan is linked to Asn-263. Cystine bridges form between Cys-282–Cys-294, Cys-288–Cys-304, Cys-295–Cys-312, Cys-305–Cys-319, Cys-313–Cys-326, Cys-320–Cys-333, Cys-364–Cys-376, Cys-370–Cys-386, Cys-395–Cys-408, and Cys-402–Cys-414. Asn-373 carries an N-linked (GlcNAc...) asparagine glycan. Residue Asn-526 is glycosylated (N-linked (GlcNAc...) asparagine).

It belongs to the granulin family. Progranulin is secreted as a homodimer. Interacts with SLPI; interaction protects progranulin from proteolysis. Interacts (via region corresponding to granulin-7 peptide) with CTSD; stabilizes CTSD and increases its proteolytic activity. Interacts (via region corresponding to granulin-7 peptide) with SORT1; this interaction mediates endocytosis and lysosome delivery of progranulin; interaction occurs at the neuronal cell surface in a stressed nervous system. Interacts with PSAP; facilitates lysosomal delivery of progranulin from the extracellular space and the biosynthetic pathway. Forms a complex with PSAP and M6PR; PSAP bridges the binding between progranulin and M6PR. Forms a complex with PSAP and SORT1; progranulin bridges the interaction between PSAP and SORT1; facilitates lysosomal targeting of PSAP via SORT1; interaction enhances PSAP uptake in primary cortical neurons. Interacts (via regions corresponding to granulin-2 and granulin-7 peptides) with GBA1; this interaction prevents aggregation of GBA1-SCARB2 complex via interaction with HSPA1A upon stress. Interacts (via region corresponding to granulin-7 peptide) with HSPA1A; mediates recruitment of HSPA1A to GBA1 and prevents GBA1 aggregation in response to stress. Post-translationally, N-glycosylated. In terms of processing, cleaved by ELANE; proteolysis is blocked by SLPI and is concentration- and time-dependent and induces CXCL8/IL-8 production; granulin-3 and granulin-4 are resistant to ELANE. Cleaved by CTSL in lysosome thus regulating the maturation and turnover of progranulin within the lysosome. Highly expressed at the wound site and diminishes away from the wound. Not expressed in fibroblasts and endothelial cells in intact skin. In adult brain, expressed primarily in neurons and in resting and reactive microglia. Expressed in both neurons and microglia. Highly expressed in activated microglia in response to injury. Expressed in macrophage.

It localises to the secreted. The protein localises to the lysosome. Functionally, secreted protein that acts as a key regulator of lysosomal function and as a growth factor involved in inflammation, wound healing and cell proliferation. Regulates protein trafficking to lysosomes, and also the activity of lysosomal enzymes. Also facilitates the acidification of lysosomes, causing degradation of mature CTSD by CTSB. In addition, functions as a wound-related growth factor that acts directly on dermal fibroblasts and endothelial cells to promote division, migration and the formation of capillary-like tubule structures. Also promotes epithelial cell proliferation by blocking TNF-mediated neutrophil activation preventing release of oxidants and proteases. Moreover, modulates inflammation in neurons by preserving neurons survival, axonal outgrowth and neuronal integrity. Inhibits epithelial cell proliferation and induces epithelial cells to secrete IL-8. In terms of biological role, stabilizes CTSD through interaction with CTSD leading to maintain its aspartic-type peptidase activity. The sequence is that of Progranulin (Grn) from Mus musculus (Mouse).